A 1347-amino-acid polypeptide reads, in one-letter code: Protocadherin-11 X-linked (1347 aa).

The first 23 residues, 1–23 (MDLLSGTYIFAVLLACVVFHSGA), serve as a signal peptide directing secretion. The Extracellular portion of the chain corresponds to 24-812 (QEKNYTIREE…VSSPTSDYVK (789 aa)). Cadherin domains are found at residues 26–139 (KNYT…APLF), 140–249 (PATV…HPVF), 250–355 (KETE…VPSI), 362–466 (NPVN…APVF), 467–570 (TQSF…SPVF), 571–673 (THNE…KPVF), and 677–795 (PSNC…APVT). N-linked (GlcNAc...) asparagine glycans are attached at residues N27, N48, and N54. N-linked (GlcNAc...) asparagine glycosylation occurs at N344. An N-linked (GlcNAc...) asparagine glycan is attached at N553. N773 carries an N-linked (GlcNAc...) asparagine glycan. Residues 813–833 (ILVAAVAGTITVVVVIFITAV) traverse the membrane as a helical segment. At 834–1347 (VRCRQAPHLK…DSPIMEEHPL (514 aa)) the chain is on the cytoplasmic side. 3 disordered regions span residues 1057-1091 (LPEG…GYPQ), 1097-1116 (RATP…ESTF), and 1326-1347 (FTPR…EHPL).

In terms of tissue distribution, expressed strongly in fetal brain and brain (cortex, amygdala, thalamus, substantia nigra, hippocampus, caudate nucleus and corpus callosum). Expressed at low level in testis.

Its subcellular location is the cell membrane. Its function is as follows. Potential calcium-dependent cell-adhesion protein. This Homo sapiens (Human) protein is Protocadherin-11 X-linked (PCDH11X).